A 727-amino-acid polypeptide reads, in one-letter code: DNA topoisomerase 3 (727 aa).

One can recognise a Toprim domain in the interval 3–136 (KTVVLAEKPS…IKRLWISSVT (134 aa)). 2 residues coordinate Mg(2+): E9 and D105. The region spanning 153-593 (YENLYHSAVA…DMKAYAHQTV (441 aa)) is the Topo IA-type catalytic domain. The interval 187–192 (SCGRVQ) is interaction with DNA. The active-site O-(5'-phospho-DNA)-tyrosine intermediate is the Y310. A compositionally biased stretch (basic and acidic residues) spans 685–699 (KRKNKDKARATKRDV). The segment at 685 to 714 (KRKNKDKARATKRDVSSYMKKQNKDEPINN) is disordered.

It belongs to the type IA topoisomerase family. Mg(2+) serves as cofactor.

It catalyses the reaction ATP-independent breakage of single-stranded DNA, followed by passage and rejoining.. Its function is as follows. Releases the supercoiling and torsional tension of DNA, which is introduced during the DNA replication and transcription, by transiently cleaving and rejoining one strand of the DNA duplex. Introduces a single-strand break via transesterification at a target site in duplex DNA. The scissile phosphodiester is attacked by the catalytic tyrosine of the enzyme, resulting in the formation of a DNA-(5'-phosphotyrosyl)-enzyme intermediate and the expulsion of a 3'-OH DNA strand. The free DNA strand then undergoes passage around the unbroken strand, thus removing DNA supercoils. Finally, in the religation step, the DNA 3'-OH attacks the covalent intermediate to expel the active-site tyrosine and restore the DNA phosphodiester backbone. The polypeptide is DNA topoisomerase 3 (Bacillus subtilis (strain 168)).